The sequence spans 174 residues: Ly6/PLAUR domain-containing protein 6 (174 aa).

Residues 1 to 22 (MEPWPLMAWGLMLTAITGWIKA) form the signal peptide. Residues 47–141 (FKCFTCEDAP…PRNETDAIFS (95 aa)) form the UPAR/Ly6 domain. 6 cysteine pairs are disulfide-bonded: C49/C77, C52/C61, C70/C96, C102/C121, C107/C118, and C122/C127. N134 and N147 each carry an N-linked (GlcNAc...) asparagine glycan. A lipid anchor (GPI-anchor amidated serine) is attached at S149. Positions 150–174 (AQSTQTLPLLLLSVSITSLMLHSIN) are cleaved as a propeptide — removed in mature form.

In terms of assembly, interacts with fzd8 and lrp6.

Its subcellular location is the cell membrane. The protein localises to the membrane raft. Acts as an important regulator of embryogenesis through its enhancement of Wnt/beta-catenin signaling. Positively regulates Wnt/beta-catenin signaling by ensuring phosphorylation of lrp6 specifically in plasma membrane rafts and its subsequent internalization into signaling-competent vesicles. Essential for the wnt8-mediated patterning of the mesoderm and neuroectoderm during gastrulation. The sequence is that of Ly6/PLAUR domain-containing protein 6 (lypd6) from Danio rerio (Zebrafish).